The following is a 267-amino-acid chain: B3 domain-containing protein At3g11580 (267 aa).

Positions Phe29 to Gly143 form a DNA-binding region, TF-B3.

It is found in the nucleus. This is B3 domain-containing protein At3g11580 (ARF32) from Arabidopsis thaliana (Mouse-ear cress).